The sequence spans 1001 residues: E3 ubiquitin-protein ligase BRE1B (1001 aa).

The interval 1–31 is disordered; sequence MSGLGNKRAAGDGGSGPPEKKLSREEKTTTT. Residues 18–28 show a composition bias toward basic and acidic residues; that stretch reads PEKKLSREEKT. K20 is modified (N6-acetyllysine). S42 carries the post-translational modification Phosphoserine. Residues 45–91 adopt a coiled-coil conformation; the sequence is EEIDLKVLQFKNKKLAERLEQRQACEDELRERIEKLEKRQATDDATL. The interval 116–149 is disordered; that stretch reads GELSSAPEAPGTQEGPTCDGTPLPEPGTSELREP. Coiled-coil stretches lie at residues 228–377 and 437–523; these read ARTR…LRSL and LQKK…AQTS. N6-acetyllysine is present on residues K355 and K517. A disordered region spans residues 516–646; sequence GKLRAQTSGS…EKAKVEEAKR (131 aa). A compositionally biased stretch (polar residues) spans 520 to 531; that stretch reads AQTSGSTHSTPN. S528 bears the Phosphoserine mark. Residues K578 and K579 each participate in a glycyl lysine isopeptide (Lys-Gly) (interchain with G-Cter in SUMO2) cross-link. S585 bears the Phosphoserine mark. Composition is skewed to basic and acidic residues over residues 602–619 and 633–646; these read RGRE…EREG and RADR…EAKR. A coiled-coil region spans residues 627-946; it reads VASALSRADR…EEIKEYKARL (320 aa). The segment at 948-987 adopts an RING-type zinc-finger fold; that stretch reads CPCCNTRKKDAVLTKCFHVFCFECVRGRYEARQRKCPKCN.

It belongs to the BRE1 family. As to quaternary structure, component of the RNF20/40 complex (also known as BRE1 complex) probably composed of 2 copies of RNF20/BRE1A and 2 copies of RNF40/BRE1B. Interacts with UBE2E1/UBCH6. Interacts with RB1 and WAC.

The protein localises to the nucleus. The enzyme catalyses S-ubiquitinyl-[E2 ubiquitin-conjugating enzyme]-L-cysteine + [acceptor protein]-L-lysine = [E2 ubiquitin-conjugating enzyme]-L-cysteine + N(6)-ubiquitinyl-[acceptor protein]-L-lysine.. Its pathway is protein modification; protein ubiquitination. Its function is as follows. Component of the RNF20/40 E3 ubiquitin-protein ligase complex that mediates monoubiquitination of 'Lys-120' of histone H2B (H2BK120ub1). H2BK120ub1 gives a specific tag for epigenetic transcriptional activation and is also prerequisite for histone H3 'Lys-4' and 'Lys-79' methylation (H3K4me and H3K79me, respectively). It thereby plays a central role in histone code and gene regulation. The RNF20/40 complex forms a H2B ubiquitin ligase complex in cooperation with the E2 enzyme UBE2A or UBE2B; reports about the cooperation with UBE2E1/UBCH are contradictory. Required for transcriptional activation of Hox genes. The polypeptide is E3 ubiquitin-protein ligase BRE1B (RNF40) (Macaca fascicularis (Crab-eating macaque)).